The primary structure comprises 339 residues: Ornithine carbamoyltransferase (339 aa).

Carbamoyl phosphate is bound by residues 56 to 59, Arg-107, and 134 to 137; these read STRT and HPTQ. L-ornithine-binding positions include Asn-168, Asp-232, and 236–237; that span reads SM. Carbamoyl phosphate-binding positions include 274–275 and Arg-320; that span reads CL.

It belongs to the aspartate/ornithine carbamoyltransferase superfamily. OTCase family.

It is found in the cytoplasm. It carries out the reaction carbamoyl phosphate + L-ornithine = L-citrulline + phosphate + H(+). The protein operates within amino-acid biosynthesis; L-arginine biosynthesis; L-arginine from L-ornithine and carbamoyl phosphate: step 1/3. Reversibly catalyzes the transfer of the carbamoyl group from carbamoyl phosphate (CP) to the N(epsilon) atom of ornithine (ORN) to produce L-citrulline. The chain is Ornithine carbamoyltransferase from Buchnera aphidicola subsp. Baizongia pistaciae (strain Bp).